The following is an 871-amino-acid chain: Alanine--tRNA ligase (871 aa).

Residues His563, His567, Cys665, and His669 each coordinate Zn(2+).

It belongs to the class-II aminoacyl-tRNA synthetase family. Requires Zn(2+) as cofactor.

It localises to the cytoplasm. It catalyses the reaction tRNA(Ala) + L-alanine + ATP = L-alanyl-tRNA(Ala) + AMP + diphosphate. Catalyzes the attachment of alanine to tRNA(Ala) in a two-step reaction: alanine is first activated by ATP to form Ala-AMP and then transferred to the acceptor end of tRNA(Ala). Also edits incorrectly charged Ser-tRNA(Ala) and Gly-tRNA(Ala) via its editing domain. The polypeptide is Alanine--tRNA ligase (Christiangramia forsetii (strain DSM 17595 / CGMCC 1.15422 / KT0803) (Gramella forsetii)).